The chain runs to 450 residues: Molybdate-anion transporter (450 aa).

Helical transmembrane passes span 1 to 21, 43 to 63, 79 to 99, 128 to 148, 176 to 196, 198 to 218, 249 to 269, 278 to 298, 311 to 331, 344 to 364, 376 to 396, and 409 to 429; these read MLVT…GLEL, LDFY…APYL, ILYV…SSLV, FVLL…FSAF, FWNH…ACWM, LGPV…GALA, VLLL…FVFL, GAPL…GSSL, PMHL…MLTF, FIAF…MSFL, GVLN…LLVL, and FSIC…LFTV.

The protein belongs to the major facilitator superfamily.

It localises to the cell membrane. Mediates high-affinity intracellular uptake of the rare oligo-element molybdenum. The polypeptide is Molybdate-anion transporter (MFSD5) (Bos taurus (Bovine)).